The primary structure comprises 295 residues: Protoheme IX farnesyltransferase 2 (295 aa).

The next 9 membrane-spanning stretches (helical) occupy residues 9–29, 36–56, 80–100, 108–128, 135–155, 163–183, 209–229, 230–250, and 265–285; these read ITKP…FFLA, LAVF…GCVF, LISL…GVAL, LAAL…SLYL, GTLV…VAVT, LTLL…IAIF, ILIY…SGYA, GMSY…MAWT, and FVFS…DFKV.

It belongs to the UbiA prenyltransferase family. Protoheme IX farnesyltransferase subfamily.

It is found in the cell inner membrane. The catalysed reaction is heme b + (2E,6E)-farnesyl diphosphate + H2O = Fe(II)-heme o + diphosphate. It functions in the pathway porphyrin-containing compound metabolism; heme O biosynthesis; heme O from protoheme: step 1/1. In terms of biological role, converts heme B (protoheme IX) to heme O by substitution of the vinyl group on carbon 2 of heme B porphyrin ring with a hydroxyethyl farnesyl side group. In Pseudomonas fluorescens (strain Pf0-1), this protein is Protoheme IX farnesyltransferase 2.